The primary structure comprises 144 residues: MCHAREASPGTGEPEAAPRDNFPREAGSKRGIGAAFETRAQRFLERAGLALVARNVTVRGGEIDLVMRERDGTLVFVEVRARANSRYGGAAASIGARKRMRLLLAAHAFWARTGGANACRFDVVAFEGGRLVWLRDAFRADDAG.

The interval 1–28 (MCHAREASPGTGEPEAAPRDNFPREAGS) is disordered. The segment covering 16–28 (AAPRDNFPREAGS) has biased composition (basic and acidic residues).

Belongs to the UPF0102 family.

This Burkholderia pseudomallei (strain K96243) protein is UPF0102 protein BPSL3274.